The following is a 128-amino-acid chain: Small ribosomal subunit protein uS13 (128 aa).

The disordered stretch occupies residues 98-128 (VRGQRTRTNARTRKGPRPRIGVKKKGKQAGS). Residues 101 to 128 (QRTRTNARTRKGPRPRIGVKKKGKQAGS) show a composition bias toward basic residues.

Belongs to the universal ribosomal protein uS13 family. Part of the 30S ribosomal subunit. Forms a loose heterodimer with protein S19. Forms two bridges to the 50S subunit in the 70S ribosome.

Located at the top of the head of the 30S subunit, it contacts several helices of the 16S rRNA. In the 70S ribosome it contacts the 23S rRNA (bridge B1a) and protein L5 of the 50S subunit (bridge B1b), connecting the 2 subunits; these bridges are implicated in subunit movement. Contacts the tRNAs in the A and P-sites. This Thermomicrobium roseum (strain ATCC 27502 / DSM 5159 / P-2) protein is Small ribosomal subunit protein uS13.